Reading from the N-terminus, the 347-residue chain is Protein N-terminal asparagine amidohydrolase (347 aa).

The catalysed reaction is N-terminal L-asparaginyl-[protein] + H2O + H(+) = N-terminal L-aspartyl-[protein] + NH4(+). Functionally, N-terminal asparagine deamidase that mediates deamidation of N-terminal asparagine residues to aspartate. Required for the ubiquitin-dependent turnover of intracellular proteins that initiate with Met-Asn. These proteins are acetylated on the retained initiator methionine and can subsequently be modified by the removal of N-acetyl methionine by acylaminoacid hydrolase (AAH). Conversion of the resulting N-terminal asparagine to aspartate by NTAN1 renders the protein susceptible to arginylation, polyubiquitination and degradation as specified by the N-end rule. This enzyme does not act on substrates with internal or C-terminal asparagines and does not act on glutamine residues in any position. Does not seem to be involved in immune response, unlike the N-terminal glutamine amidohydrolase NTAQ1. This chain is Protein N-terminal asparagine amidohydrolase, found in Arabidopsis thaliana (Mouse-ear cress).